Here is a 22-residue protein sequence, read N- to C-terminus: Antimicrobial peptide 4 (22 aa).

In terms of tissue distribution, expressed by the skin glands.

It is found in the secreted. Its function is as follows. Has very strong antimicrobial activity against Gram-positive bacterium S.aureus and yeast C.albicans, and very weak activity against Gram-negative bacterium E.coli. Has strong hemolytic activity against human red blood cells. This is Antimicrobial peptide 4 from Xenopus tropicalis (Western clawed frog).